A 178-amino-acid chain; its full sequence is Cyclin-dependent kinase inhibitor 1B (178 aa).

A compositionally biased stretch (polar residues) spans 1 to 11 (MSNVRVSNGSP). Residues 1 to 31 (MSNVRVSNGSPSLERMDARQAEYPKPSACRN) form a disordered region. Serine 10 is modified (phosphoserine; by UHMK1). The interaction with CDK2 stretch occupies residues 51–91 (DMEEASQRKWNFDFQNHKPLEGKYEWQEVEKGSLPEFYYRP). Tyrosine 74 bears the Phosphotyrosine; by SRC mark. The segment at 87-178 (FYYRPPRPPK…RTEENVSDGS (92 aa)) is disordered. Tyrosine 88 bears the Phosphotyrosine; by ABL, LYN, SRC and JAK2 mark. A Phosphotyrosine modification is found at tyrosine 89. The span at 104–113 (QESQDVSGTR) shows a compositional bias: polar residues. The segment covering 126–137 (EDTHLVDQKTDT) has biased composition (basic and acidic residues). The short motif at 153 to 169 (KRPATDDSSPQNKRANR) is the Nuclear localization signal element. The residue at position 157 (threonine 157) is a Phosphothreonine; by CaMK1, PKB/AKT1, RPS6KA1, RPS6KA3 and PIM1. At threonine 170 the chain carries Phosphothreonine.

This sequence belongs to the CDI family. In terms of assembly, forms a ternary complex composed of CCNE1, CDK2 and CDKN1B. Interacts directly with CCNE1; the interaction is inhibited by CDK2-dependent phosphorylation. Interacts with COPS5, subunit of the COP9 signalosome complex; the interaction leads to CDKN1B degradation. Interacts with NUP50; the interaction leads to nuclear import and degradation of phosphorylated CDKN1B. Interacts with CCND1 and SNX6. Interacts (Thr-198-phosphorylated form) with 14-3-3 proteins, binds strongly YWHAQ, weakly YWHAE and YWHAH, but not YWHAB nor YWHAZ; the interaction with YWHAQ results in translocation to the cytoplasm. Interacts with AKT1 and LYN; the interactions lead to cytoplasmic mislocation, phosphorylation of CDKN1B and inhibition of cell cycle arrest. Forms a ternary complex with CCNA2 and CDK2; CDKN1B inhibits the kinase activity of CDK2 through conformational rearrangements. Interacts (unphosphorylated form) with CDK2. Forms a complex with CDK2 and SPDYA, but does not directly interact with SPDYA. Forms a ternary complex composed of cyclin D, CDK4 and CDKN1B. Interacts (phosphorylated on Tyr-88 and Tyr-89) with CDK4; the interaction is required for cyclin D and CDK4 complex assembly, induces nuclear translocation and activates the CDK4 kinase activity. Interacts with GRB2. Interacts with PIM1. Identified in a complex with SKP1, SKP2 and CKS1B. Interacts with UHMK1; the interaction leads to cytoplasmic mislocation, phosphorylation of CDKN1B and inhibition of cell cycle arrest. Also interacts with CDK1. Dephosphorylated by PPM1H, leading to CDKN1B stability. In terms of processing, phosphorylated; phosphorylation occurs on serine, threonine and tyrosine residues. Phosphorylation on Ser-10 is the major site of phosphorylation in resting cells, takes place at the G(0)-G(1) phase and leads to protein stability. Phosphorylation on other sites is greatly enhanced by mitogens, growth factors, MYC and in certain cancer cell lines. The phosphorylated form found in the cytoplasm is inactivate. Phosphorylation on Tyr-88 has no effect on binding CDK complexes. Ubiquitinated; in the cytoplasm by the KPC complex (composed of RNF123/KPC1 and UBAC1/KPC2) and, in the nucleus, by SCF(SKP2). The latter requires prior phosphorylation on Thr-187. Ubiquitinated; by a TRIM21-containing SCF(SKP2)-like complex; leads to its degradation. Post-translationally, subject to degradation in the lysosome. Interaction with SNX6 promotes lysosomal degradation.

The protein localises to the nucleus. The protein resides in the cytoplasm. It is found in the endosome. Functionally, important regulator of cell cycle progression. Inhibits the kinase activity of CDK2 bound to cyclin A, but has little inhibitory activity on CDK2 bound to SPDYA. Involved in G1 arrest. Potent inhibitor of cyclin E- and cyclin A-CDK2 complexes. Forms a complex with cyclin type D-CDK4 complexes and is involved in the assembly, stability, and modulation of CCND1-CDK4 complex activation. Acts either as an inhibitor or an activator of cyclin type D-CDK4 complexes depending on its phosphorylation state and/or stoichometry. The sequence is that of Cyclin-dependent kinase inhibitor 1B (CDKN1B) from Neovison vison (American mink).